Reading from the N-terminus, the 372-residue chain is N-methyl-L-tryptophan oxidase (372 aa).

4 to 34 (DLIIIGSGSVGAAAGYYATRAGLNVLMTDAH) provides a ligand contact to FAD. C308 is subject to S-8alpha-FAD cysteine.

Belongs to the MSOX/MTOX family. MTOX subfamily. As to quaternary structure, monomer. The cofactor is FAD.

It catalyses the reaction N(alpha)-methyl-L-tryptophan + O2 + H2O = L-tryptophan + formaldehyde + H2O2. Functionally, catalyzes the oxidative demethylation of N-methyl-L-tryptophan. This Shigella dysenteriae serotype 1 (strain Sd197) protein is N-methyl-L-tryptophan oxidase.